The chain runs to 1303 residues: Phosphoribosylformylglycinamidine synthase (1303 aa).

Residues 308–319 and alanine 679 contribute to the ATP site; that span reads GASTGSGGEIRD. Glutamate 719, asparagine 723, and aspartate 892 together coordinate Mg(2+). The disordered stretch occupies residues 1003–1023; the sequence is LRDNPACADQEHEAKKDNSDP. Residues 1011-1021 show a composition bias toward basic and acidic residues; that stretch reads DQEHEAKKDNS. A Glutamine amidotransferase type-1 domain is found at 1050–1303; sequence MAILREQGVN…MFQNARKNIG (254 aa). Cysteine 1143 (nucleophile) is an active-site residue. Active-site residues include histidine 1268 and glutamate 1270.

This sequence in the N-terminal section; belongs to the FGAMS family. Monomer.

It localises to the cytoplasm. It catalyses the reaction N(2)-formyl-N(1)-(5-phospho-beta-D-ribosyl)glycinamide + L-glutamine + ATP + H2O = 2-formamido-N(1)-(5-O-phospho-beta-D-ribosyl)acetamidine + L-glutamate + ADP + phosphate + H(+). It functions in the pathway purine metabolism; IMP biosynthesis via de novo pathway; 5-amino-1-(5-phospho-D-ribosyl)imidazole from N(2)-formyl-N(1)-(5-phospho-D-ribosyl)glycinamide: step 1/2. Phosphoribosylformylglycinamidine synthase involved in the purines biosynthetic pathway. Catalyzes the ATP-dependent conversion of formylglycinamide ribonucleotide (FGAR) and glutamine to yield formylglycinamidine ribonucleotide (FGAM) and glutamate. The polypeptide is Phosphoribosylformylglycinamidine synthase (Aliivibrio fischeri (strain ATCC 700601 / ES114) (Vibrio fischeri)).